A 233-amino-acid polypeptide reads, in one-letter code: Orotidine 5'-phosphate decarboxylase (233 aa).

Residues Asp-9, Lys-31, Asp-58–Thr-67, Thr-120, Arg-182, Gln-191, Gly-211, and Arg-212 each bind substrate. The active-site Proton donor is the Lys-60.

This sequence belongs to the OMP decarboxylase family. Type 1 subfamily. In terms of assembly, homodimer.

The catalysed reaction is orotidine 5'-phosphate + H(+) = UMP + CO2. It participates in pyrimidine metabolism; UMP biosynthesis via de novo pathway; UMP from orotate: step 2/2. Its function is as follows. Catalyzes the decarboxylation of orotidine 5'-monophosphate (OMP) to uridine 5'-monophosphate (UMP). The chain is Orotidine 5'-phosphate decarboxylase from Listeria welshimeri serovar 6b (strain ATCC 35897 / DSM 20650 / CCUG 15529 / CIP 8149 / NCTC 11857 / SLCC 5334 / V8).